The following is a 427-amino-acid chain: Thyroid hormone receptor alpha-A (427 aa).

The segment covering 1–11 (MENTEQEHNLP) has biased composition (basic and acidic residues). The segment at 1-40 (MENTEQEHNLPEGDETQWPNGVKRKRKNSQCSMNSTSDKS) is disordered. The modulating stretch occupies residues 1-56 (MENTEQEHNLPEGDETQWPNGVKRKRKNSQCSMNSTSDKSISVPGYVPSYLEKDEP). Over residues 29-40 (SQCSMNSTSDKS) the composition is skewed to polar residues. 2 consecutive NR C4-type zinc fingers follow at residues 57 to 77 (CVVC…CEGC) and 95 to 119 (CKYD…FRKC). The segment at residues 57–131 (CVVCGDKATG…VGMAMDLVLD (75 aa)) is a DNA-binding region (nuclear receptor). Positions 167-410 (SEWELIRMVT…PPLFLEVFED (244 aa)) constitute an NR LBD domain.

This sequence belongs to the nuclear hormone receptor family. NR1 subfamily. Interacts with ncoa2. In terms of tissue distribution, after the mid-blastula transition (MBT), expressed throughout the deep cells, which give rise to the embryo proper. In adults, isoform 2 shows highest expression in the eye and liver. Expressed in adult gonads.

The protein localises to the nucleus. In terms of biological role, high affinity receptor for triiodothyronine. In the absence of thyroid hormone during late blastula stage development, acts as a transcriptional repressor. Whereas in the presence of thyroid hormone, can act as an activator of transcription. In addition, represses retinoic acid (RA)-signaling during blastula and gastrula stages of development. This is Thyroid hormone receptor alpha-A (thraa) from Danio rerio (Zebrafish).